The primary structure comprises 82 residues: ATP synthase subunit c (82 aa).

2 helical membrane-spanning segments follow: residues 7–27 (AASV…PGIG) and 57–77 (FAFM…LLFA).

This sequence belongs to the ATPase C chain family. As to quaternary structure, F-type ATPases have 2 components, F(1) - the catalytic core - and F(0) - the membrane proton channel. F(1) has five subunits: alpha(3), beta(3), gamma(1), delta(1), epsilon(1). F(0) has four main subunits: a(1), b(1), b'(1) and c(10-14). The alpha and beta chains form an alternating ring which encloses part of the gamma chain. F(1) is attached to F(0) by a central stalk formed by the gamma and epsilon chains, while a peripheral stalk is formed by the delta, b and b' chains.

The protein localises to the cellular thylakoid membrane. In terms of biological role, f(1)F(0) ATP synthase produces ATP from ADP in the presence of a proton or sodium gradient. F-type ATPases consist of two structural domains, F(1) containing the extramembraneous catalytic core and F(0) containing the membrane proton channel, linked together by a central stalk and a peripheral stalk. During catalysis, ATP synthesis in the catalytic domain of F(1) is coupled via a rotary mechanism of the central stalk subunits to proton translocation. Its function is as follows. Key component of the F(0) channel; it plays a direct role in translocation across the membrane. A homomeric c-ring of between 10-14 subunits forms the central stalk rotor element with the F(1) delta and epsilon subunits. In Prochlorococcus marinus (strain MIT 9303), this protein is ATP synthase subunit c.